The primary structure comprises 698 residues: Polyphosphate kinase (698 aa).

Residue Asn63 coordinates ATP. Mg(2+) is bound by residues Arg390 and Arg420. His450 acts as the Phosphohistidine intermediate in catalysis. The ATP site is built by Tyr483, Arg579, and His607.

Belongs to the polyphosphate kinase 1 (PPK1) family. Requires Mg(2+) as cofactor. Post-translationally, an intermediate of this reaction is the autophosphorylated ppk in which a phosphate is covalently linked to a histidine residue through a N-P bond.

It catalyses the reaction [phosphate](n) + ATP = [phosphate](n+1) + ADP. Its function is as follows. Catalyzes the reversible transfer of the terminal phosphate of ATP to form a long-chain polyphosphate (polyP). This Xylella fastidiosa (strain 9a5c) protein is Polyphosphate kinase.